The sequence spans 408 residues: LL-diaminopimelate aminotransferase (408 aa).

Residues tyrosine 15 and glycine 42 each contribute to the substrate site. Residues tyrosine 72, 108–109, tyrosine 132, asparagine 186, tyrosine 217, and 245–247 each bind pyridoxal 5'-phosphate; these read AK and SFS. Positions 109, 132, and 186 each coordinate substrate. The residue at position 248 (lysine 248) is an N6-(pyridoxal phosphate)lysine. Positions 256 and 291 each coordinate pyridoxal 5'-phosphate. Substrate contacts are provided by asparagine 291 and arginine 386.

The protein belongs to the class-I pyridoxal-phosphate-dependent aminotransferase family. LL-diaminopimelate aminotransferase subfamily. As to quaternary structure, homodimer. Pyridoxal 5'-phosphate is required as a cofactor.

The enzyme catalyses (2S,6S)-2,6-diaminopimelate + 2-oxoglutarate = (S)-2,3,4,5-tetrahydrodipicolinate + L-glutamate + H2O + H(+). It participates in amino-acid biosynthesis; L-lysine biosynthesis via DAP pathway; LL-2,6-diaminopimelate from (S)-tetrahydrodipicolinate (aminotransferase route): step 1/1. Its function is as follows. Involved in the synthesis of meso-diaminopimelate (m-DAP or DL-DAP), required for both lysine and peptidoglycan biosynthesis. Catalyzes the direct conversion of tetrahydrodipicolinate to LL-diaminopimelate. The polypeptide is LL-diaminopimelate aminotransferase (Desulfotalea psychrophila (strain LSv54 / DSM 12343)).